A 193-amino-acid chain; its full sequence is Ribonuclease HII (193 aa).

The region spanning 15-193 is the RNase H type-2 domain; it reads YIVAGIDEAG…PYHRKSFKCC (179 aa). 3 residues coordinate a divalent metal cation: D21, E22, and D112.

The protein belongs to the RNase HII family. Mn(2+) is required as a cofactor. Requires Mg(2+) as cofactor.

The protein resides in the cytoplasm. The enzyme catalyses Endonucleolytic cleavage to 5'-phosphomonoester.. Endonuclease that specifically degrades the RNA of RNA-DNA hybrids. The protein is Ribonuclease HII of Rickettsia akari (strain Hartford).